The sequence spans 183 residues: MNREQIAEALRQNQVVAYPTEAVFGLGCNPQSESAVKKLLDLKQRPVEKGLILVAPSLDFFRPFVDFEQINDEQLSHLQGKYERPTTWIVPAKSTTSHFLTGKFDSIAIRLCDHPSVKALCELTGFALTSTSANLTGEPPCRTADEVRLQFGADFPVLDEIVGDARNPSEIRDLRTNQLFRQG.

The YrdC-like domain maps to 1 to 183 (MNREQIAEAL…LRTNQLFRQG (183 aa)).

The protein belongs to the SUA5 family. TsaC subfamily.

Its subcellular location is the cytoplasm. It carries out the reaction L-threonine + hydrogencarbonate + ATP = L-threonylcarbamoyladenylate + diphosphate + H2O. Functionally, required for the formation of a threonylcarbamoyl group on adenosine at position 37 (t(6)A37) in tRNAs that read codons beginning with adenine. Catalyzes the conversion of L-threonine, HCO(3)(-)/CO(2) and ATP to give threonylcarbamoyl-AMP (TC-AMP) as the acyladenylate intermediate, with the release of diphosphate. This is Threonylcarbamoyl-AMP synthase from Haemophilus influenzae (strain 86-028NP).